A 520-amino-acid chain; its full sequence is J protein JJJ2 (520 aa).

The region spanning 7-71 is the J domain; that stretch reads TYYSVLGLPT…SSKQEYDAIL (65 aa). Disordered regions lie at residues 82 to 257 and 389 to 409; these read LGYK…DLQN and FESS…RGRP. The span at 91-100 shows a compositional bias: low complexity; sequence QNQSNNLNQQ. Residues 152 to 182 show a composition bias toward polar residues; that stretch reads TSKNSKEQQGSQETTNTSENLQRNAKGNKNN. The segment covering 397–409 has biased composition (basic and acidic residues); the sequence is ENHRSDFNLRGRP.

The protein localises to the cytoplasm. It localises to the nucleus. In Vanderwaltozyma polyspora (strain ATCC 22028 / DSM 70294 / BCRC 21397 / CBS 2163 / NBRC 10782 / NRRL Y-8283 / UCD 57-17) (Kluyveromyces polysporus), this protein is J protein JJJ2 (JJJ2).